Here is a 255-residue protein sequence, read N- to C-terminus: Large ribosomal subunit protein uL6m (255 aa).

The disordered stretch occupies residues 39–61 (AARRNFSATTTRPSKLGRTPLSI).

The protein belongs to the universal ribosomal protein uL6 family. As to quaternary structure, component of the mitochondrial large ribosomal subunit (mt-LSU). Mature N.crassa 74S mitochondrial ribosomes consist of a small (37S) and a large (54S) subunit. The 37S small subunit contains a 16S ribosomal RNA (16S mt-rRNA) and 32 different proteins. The 54S large subunit contains a 23S rRNA (23S mt-rRNA) and 42 different proteins.

The protein resides in the mitochondrion. Its function is as follows. Component of the mitochondrial ribosome (mitoribosome), a dedicated translation machinery responsible for the synthesis of mitochondrial genome-encoded proteins, including at least some of the essential transmembrane subunits of the mitochondrial respiratory chain. The mitoribosomes are attached to the mitochondrial inner membrane and translation products are cotranslationally integrated into the membrane. The polypeptide is Large ribosomal subunit protein uL6m (mrpl6) (Neurospora crassa (strain ATCC 24698 / 74-OR23-1A / CBS 708.71 / DSM 1257 / FGSC 987)).